Reading from the N-terminus, the 209-residue chain is MSIEKQVAEQLLEIKAVFLKPNEPFTWASGIKSPIYCDNRLTLGFPKVRQFIAKSLAEKIKENFGEVDVVAGTATAGIPHAAWVSDLLDLPMVYVRSKAKEHGKGNQIEGPLTKGQKVVVIEDLISTGGSSLKAVEALEEAGAEVLGIAAIFTYGLDKGKKLLEESNTKLVTLTNYDELIEVALNKNYVTTEDMATLKEWKKNPEVWGK.

5-phospho-alpha-D-ribose 1-diphosphate contacts are provided by residues arginine 96, lysine 100, histidine 102, and 122–130 (EDLISTGGS). Residue serine 126 participates in orotate binding.

This sequence belongs to the purine/pyrimidine phosphoribosyltransferase family. PyrE subfamily. As to quaternary structure, homodimer. Mg(2+) serves as cofactor.

It catalyses the reaction orotidine 5'-phosphate + diphosphate = orotate + 5-phospho-alpha-D-ribose 1-diphosphate. It participates in pyrimidine metabolism; UMP biosynthesis via de novo pathway; UMP from orotate: step 1/2. Catalyzes the transfer of a ribosyl phosphate group from 5-phosphoribose 1-diphosphate to orotate, leading to the formation of orotidine monophosphate (OMP). This Listeria innocua serovar 6a (strain ATCC BAA-680 / CLIP 11262) protein is Orotate phosphoribosyltransferase.